A 33-amino-acid chain; its full sequence is Gastrin (33 aa).

The disordered stretch occupies residues 1–21; the sequence is ELEPQGPPHLGTDLSKKQGPW. Gln-18 carries the pyrrolidone carboxylic acid modification. Sulfotyrosine is present on Tyr-28. At Phe-33 the chain carries Phenylalanine amide.

The protein belongs to the gastrin/cholecystokinin family.

It localises to the secreted. Its function is as follows. Gastrin stimulates the stomach mucosa to produce and secrete hydrochloric acid and the pancreas to secrete its digestive enzymes. It also stimulates smooth muscle contraction and increases blood circulation and water secretion in the stomach and intestine. The chain is Gastrin (GAST) from Chinchilla chinchilla (Short-tailed chinchilla).